A 302-amino-acid chain; its full sequence is Glutamate/aspartate import solute-binding protein (302 aa).

The signal sequence occupies residues 1–22; that stretch reads MQLRKPATAILALALSAGLAQA.

Belongs to the bacterial solute-binding protein 3 family. As to quaternary structure, the complex is composed of two ATP-binding proteins (GltL), two transmembrane proteins (GltJ and GltK) and a solute-binding protein (GltI).

The protein resides in the periplasm. Part of the ABC transporter complex GltIJKL involved in glutamate and aspartate uptake. Binds to both glutamate and aspartate. This chain is Glutamate/aspartate import solute-binding protein (gltI), found in Escherichia coli (strain K12).